A 60-amino-acid polypeptide reads, in one-letter code: Protein BNLF2a (60 aa).

Positions 14–26 (SSACGLPGSSTET) are enriched in polar residues. Positions 14 to 34 (SSACGLPGSSTETRPSHPCPE) are disordered. The chain crosses the membrane as a helical span at residues 41 to 59 (LRLLLVVLCVLFGLLCLLL).

It belongs to the lymphocryptovirus BNLF2a family. As to quaternary structure, interacts with host TAP1 and TAP2.

It is found in the host endoplasmic reticulum membrane. In terms of biological role, participates in viral evasion from HLA class I-restricted T-cell immunity. Associates with host TAP1 and TAP2 and prevents TAP-mediated peptide transport and subsequent loading. The protein is Protein BNLF2a of Homo sapiens (Human).